The primary structure comprises 667 residues: Protein-glutamine gamma-glutamyltransferase 4 (667 aa).

Asn-151, Asn-220, and Asn-227 each carry an N-linked (GlcNAc...) asparagine glycan. Catalysis depends on residues Cys-256, His-315, and Asp-338. Asn-378 and Asp-380 together coordinate Ca(2+). N-linked (GlcNAc...) asparagine glycosylation occurs at Asn-408. 2 residues coordinate Ca(2+): Glu-430 and Glu-435. The tract at residues 430–449 (EGSPEERKAMEKASGKRPDD) is disordered. N-linked (GlcNAc...) asparagine glycans are attached at residues Asn-472 and Asn-488.

The protein belongs to the transglutaminase superfamily. Transglutaminase family. As to quaternary structure, homodimer. Ca(2+) is required as a cofactor. Post-translationally, the N-terminus is blocked. In terms of processing, probably linked to the cell membrane via a lipid-anchor, possibly a GPI-anchor. N-glycosylated on 2 Asn residues by a high mannose oligosaccharide consisting of five mannose residues and a fucosylated biantennary complex glycan. Expressed in the coagulating gland, the dorsal part of the prostate and in semen (at protein level). Expressed at low levels in the lateral prostate and seminal vesicle. Not expressed in the epididymis, kidney, liver, serum, sperm plug, testes and ventral prostate.

Its subcellular location is the secreted. It is found in the cell membrane. It carries out the reaction L-glutaminyl-[protein] + L-lysyl-[protein] = [protein]-L-lysyl-N(6)-5-L-glutamyl-[protein] + NH4(+). Its function is as follows. Associated with the mammalian reproductive process. Plays an important role in the formation of the seminal coagulum through the cross-linking of specific proteins present in the seminal plasma. Transglutaminase is also required to stabilize the copulatory plug. The sequence is that of Protein-glutamine gamma-glutamyltransferase 4 (Tgm4) from Rattus norvegicus (Rat).